The primary structure comprises 1115 residues: MALRKRSPHGLGFLCCFGGSDLPEIDLRDSHPLQYLEFSGPIPNPEELNVRFAELVDELDLTDKNREAVFALPPEKKWQIYCSKRKEQEDPNKLATSWPEYYIDRINAMAAMQNLYETEDEETDKRNQVVEDLKTALRTQPMRFVTRFIDLEGLTCLLNFLRGMDHTTCESRIHTSLIGCIKALMNNSQGRAHVLAQPEAISIIAQSLRTENSKTKVAVLEILGAVCLVPGGHKKVLQAMLHYQAYAAERTRFQTLLNELDRSLGRYRDEVNLKTAIMSFINAVLNAGAGEDNLEFRLHLRYEFLMLGIQPVIDKLRQHENAILDKHLDFFEMVRNEDDLELARRFDMVHIDTKSASQMFELIHKKLKHTEAYPCLLSVLHHCLQMPYKRNGGYFQQWQLLDRILQQIVLQDERGVDPDLAPLENFNVKNIVNMLINENEVKQWRDQAEKFRKEHMELMSRLERKERECETKTLEKEEMMRTLNKMKDKLARESQELRQARGQVAELVARHNESSTGPVSSPPPPGGPLTLSSSRTTNDLPPPPPPLPFDSCPPPPAPPLPPGGPPIPPGAPPCFSSGPPPSHDPFSSNEAPLRKKRIPQPSHPLKSFNWVKLNEERVSGTVWNEIDDSQVFRILDLEDFEKMFSAYQRHQACMQEGPQRERGNVRDGGAASRPLPAVEASAHRTEKASRSMVSATGAKKELGSTEDIYITSRKVKELSVIDGRRAQNCIILLSKLKLSNDEIRQAILRMDEQEDLAKDMLEQLLKFIPEKSDIDLLEEHKHEIERMARADRFLYEMSRIDHYQQRLQALFFKKKFQERLAEAKPKVEAILLASRELTLSQRLKQMLEVVLAIGNFMNKGQRGGAYGFRVASLNKIADTKSSIDRNISLLHYLIMILEKHFPDILNMPSELKHLSEAAKVNLAELEKEVSILRRGLRAVEVELEYQRHQARDPNDKFVPVMSDFITVSSFSFSELEDQLNEARDKFAKALTHFGEQESKMQPDEFFGIFDTFLQAFLEARQDLEAMRRRKEEDERRARMEFMLKEQREKERWQRQRKVLAGGALEESGEFDDLVSALRSGEVFDKDLSKFKRNRKRPGSQVPEVTRERAINRLNY.

Residues 40 to 416 (GPIPNPEELN…QIVLQDERGV (377 aa)) form the GBD/FH3 domain. Positions 434–515 (MLINENEVKQ…ELVARHNESS (82 aa)) form a coiled coil. 2 disordered regions span residues 510-605 (RHNE…SHPL) and 655-697 (QEGP…SATG). Residues 518 to 694 (PVSSPPPPGG…TEKASRSMVS (177 aa)) enclose the FH1 domain. Residues 540-583 (LPPPPPPLPFDSCPPPPAPPLPPGGPPIPPGAPPCFSSGPPPSH) show a composition bias toward pro residues. The FH2 domain occupies 595 to 1042 (KKRIPQPSHP…DERRARMEFM (448 aa)). One can recognise a DAD domain in the interval 1065-1095 (EESGEFDDLVSALRSGEVFDKDLSKFKRNRK).

The protein belongs to the formin homology family. Interacts with DVL3. Interacts with INF2. As to expression, in early embryogenesis, expression is confined to embryonic ectoderm. Highly dynamic expression in later stages of gastrulation. In early somite stages, detected in posterior node and persists until 9-10 somites have developed when expression is concentrated in the chordoneural hinge. During organogenesis, expressed in the CNS, PNS, liver primordia, limb buds and genital tubercle.

Key regulator of the Wnt signaling pathway, which is required for various processes during development, such as dorsal patterning, determination of left/right symmetry or myelination in the central nervous system. Acts downstream of Wnt ligands and upstream of beta-catenin (CTNNB1). Required for canonical Wnt signaling pathway during patterning in the dorsal spinal cord by promoting the aggregation of Disheveled (Dvl) complexes, thereby clustering and formation of Wnt receptor signalosomes and potentiating Wnt activity. During dorsal patterning of the spinal cord, inhibits oligodendrocytes differentiation via interaction with PIP5K1A. Also regulates non-canonical Wnt signaling pathway. Acts downstream of PITX2 in the developing gut and is required for left/right asymmetry within dorsal mesentery: affects mesenchymal condensation by lengthening cadherin-based junctions through WNT5A and non-canonical Wnt signaling, inducing polarized condensation in the left dorsal mesentery necessary to initiate gut rotation. Together with DAAM1, required for myocardial maturation and sarcomere assembly. Is a regulator of actin nucleation and elongation, filopodia formation and podocyte migration. The chain is Disheveled-associated activator of morphogenesis 2 from Mus musculus (Mouse).